Consider the following 364-residue polypeptide: Coproporphyrin III ferrochelatase (364 aa).

Fe-coproporphyrin III contacts are provided by Arg-29 and Tyr-118. Positions 169 and 250 each coordinate Fe(2+).

This sequence belongs to the ferrochelatase family.

The protein resides in the cytoplasm. The enzyme catalyses Fe-coproporphyrin III + 2 H(+) = coproporphyrin III + Fe(2+). The protein operates within porphyrin-containing compound metabolism; protoheme biosynthesis. Its function is as follows. Involved in coproporphyrin-dependent heme b biosynthesis. Catalyzes the insertion of ferrous iron into coproporphyrin III to form Fe-coproporphyrin III. In Streptococcus pneumoniae serotype 2 (strain D39 / NCTC 7466), this protein is Coproporphyrin III ferrochelatase.